The sequence spans 363 residues: Sensor protein BasS (363 aa).

The Cytoplasmic segment spans residues 1-13; it reads MHFLRRPISLRQR. The helical transmembrane segment at 14-34 threads the bilayer; sequence LILTIGAILLVFELISVFWLW. Over 35–64 the chain is Periplasmic; it reads HESTEQIQLFEQALRDNRNNDRHIMREIRE. Residues 65–88 traverse the membrane as a helical segment; it reads AVASLIVPGVFMVSLTLFICYQAV. The HAMP domain maps to 89-141; the sequence is RRITRPLAELQKELEARTADNLTPIAIHSATLEIEAVVSALNDLVSRLTSTLD. Residues 89 to 363 are Cytoplasmic-facing; that stretch reads RRITRPLAEL…KKDQYVANQI (275 aa). In terms of domain architecture, Histidine kinase spans 149–357; sequence DVAHELRTPL…RAWVRLKKDQ (209 aa). Position 152 is a phosphohistidine; by autocatalysis (histidine 152).

Post-translationally, autophosphorylated.

It is found in the cell inner membrane. The catalysed reaction is ATP + protein L-histidine = ADP + protein N-phospho-L-histidine.. Its function is as follows. Member of the two-component regulatory system BasS/BasR Autophosphorylates and activates BasR by phosphorylation. The chain is Sensor protein BasS (basS) from Escherichia coli (strain K12).